The primary structure comprises 665 residues: Cysteine-rich receptor-like protein kinase 26 (665 aa).

The N-terminal stretch at 1 to 22 (MLSLLLPLISLLFQIQCFTVKS) is a signal peptide. The Extracellular segment spans residues 23-283 (QPVPLNQICS…GDKNRGVPKA (261 aa)). Gnk2-homologous domains are found at residues 26 to 129 (PLNQ…NRTI) and 135 to 244 (ISPH…PWRF). 6 N-linked (GlcNAc...) asparagine glycosylation sites follow: Asn33, Asn37, Asn67, Asn126, Asn146, and Asn266. The interval 251 to 275 (DDPSSVPATPSRPPKNETRSVTQGD) is disordered. Residues 284 to 304 (LIFASASVAIVVLFIVLLVVF) traverse the membrane as a helical segment. Topologically, residues 305–665 (LKLRRKENIR…YNSNTELYPR (361 aa)) are cytoplasmic. The 281-residue stretch at 344–624 (FSLENKLGEG…VLMLDGHTIA (281 aa)) folds into the Protein kinase domain. ATP contacts are provided by residues 350–358 (LGEGGFGAV) and Lys372. Phosphotyrosine is present on Tyr417. The active-site Proton acceptor is the Asp469. The residue at position 473 (Ser473) is a Phosphoserine. Thr510 is subject to Phosphothreonine. Tyr518 bears the Phosphotyrosine mark. The segment at 641 to 665 (SDSSSSLGHNAKTSNYNSNTELYPR) is disordered. Over residues 647–665 (LGHNAKTSNYNSNTELYPR) the composition is skewed to polar residues.

It belongs to the protein kinase superfamily. Ser/Thr protein kinase family. CRK subfamily.

The protein resides in the membrane. It carries out the reaction L-seryl-[protein] + ATP = O-phospho-L-seryl-[protein] + ADP + H(+). The enzyme catalyses L-threonyl-[protein] + ATP = O-phospho-L-threonyl-[protein] + ADP + H(+). In Arabidopsis thaliana (Mouse-ear cress), this protein is Cysteine-rich receptor-like protein kinase 26 (CRK26).